A 736-amino-acid chain; its full sequence is 1,4-alpha-glucan branching enzyme GlgB (736 aa).

The active-site Nucleophile is the D415. The Proton donor role is filled by E470.

This sequence belongs to the glycosyl hydrolase 13 family. GlgB subfamily. Monomer.

The catalysed reaction is Transfers a segment of a (1-&gt;4)-alpha-D-glucan chain to a primary hydroxy group in a similar glucan chain.. It participates in glycan biosynthesis; glycogen biosynthesis. Catalyzes the formation of the alpha-1,6-glucosidic linkages in glycogen by scission of a 1,4-alpha-linked oligosaccharide from growing alpha-1,4-glucan chains and the subsequent attachment of the oligosaccharide to the alpha-1,6 position. The sequence is that of 1,4-alpha-glucan branching enzyme GlgB from Burkholderia orbicola (strain AU 1054).